The following is a 477-amino-acid chain: Glycogen synthase (477 aa).

Lys15 is an ADP-alpha-D-glucose binding site.

This sequence belongs to the glycosyltransferase 1 family. Bacterial/plant glycogen synthase subfamily.

It carries out the reaction [(1-&gt;4)-alpha-D-glucosyl](n) + ADP-alpha-D-glucose = [(1-&gt;4)-alpha-D-glucosyl](n+1) + ADP + H(+). It functions in the pathway glycan biosynthesis; glycogen biosynthesis. In terms of biological role, synthesizes alpha-1,4-glucan chains using ADP-glucose. The sequence is that of Glycogen synthase from Mannheimia succiniciproducens (strain KCTC 0769BP / MBEL55E).